Reading from the N-terminus, the 1003-residue chain is DNA topoisomerase 3-alpha (1003 aa).

The Toprim domain maps to 35 to 179; that stretch reads KVLCVAEKND…NLRVLRARFS (145 aa). Residues 197–617 enclose the Topo IA-type catalytic domain; sequence DQRVSDAVDV…QQVQKYKQVF (421 aa). Residue Tyr-362 is the O-(5'-phospho-DNA)-tyrosine intermediate of the active site. The segment at 400-426 is disordered; the sequence is GGPTPRNGSKSDQAHPPIHPTKYTSGL. The segment at 658–685 adopts a C4-type zinc-finger fold; that stretch reads CPQCNKDMVLKTKKSGGFYLSCMGFPEC. The Zn(2+) site is built by Cys-815, Cys-817, Cys-840, and Cys-845. A GRF-type 1 zinc finger spans residues 815–854; sequence CNCGREAVLLTVRKQGPNQGRHFYKCSNGDCNFFLWADSS. The tract at residues 856 to 888 is disordered; the sequence is STGGGTPTSASGPPGSSVGCPSSVGSHMDGFGS. The segment covering 862-888 has biased composition (low complexity); it reads PTSASGPPGSSVGCPSSVGSHMDGFGS. Zn(2+)-binding residues include Cys-899, Cys-901, Cys-924, and Cys-932. The GRF-type 2 zinc finger occupies 899–941; it reads CLCGQPAVTRTVQKDGPNKGRQFHTCAKPREQQCGFFQWVDEN. The segment at 946-991 is disordered; it reads SFAAPAWPGGRGKAQRPEAASKRPRAGSSDAGSTVKKPRKCSLCHQ.

Belongs to the type IA topoisomerase family. In terms of assembly, binds ssDNA. Interacts (via N-terminal region) with BLM; the interaction is direct. Directly interacts with RMI1. Component of the RMI complex, containing at least TOP3A, RMI1 and RMI2. The RMI complex interacts with BLM. Mg(2+) serves as cofactor. As to expression, highly expressed in testis.

The protein resides in the mitochondrion matrix. The catalysed reaction is ATP-independent breakage of single-stranded DNA, followed by passage and rejoining.. Its function is as follows. Releases the supercoiling and torsional tension of DNA introduced during the DNA replication and transcription by transiently cleaving and rejoining one strand of the DNA duplex. Introduces a single-strand break via transesterification at a target site in duplex DNA. The scissile phosphodiester is attacked by the catalytic tyrosine of the enzyme, resulting in the formation of a DNA-(5'-phosphotyrosyl)-enzyme intermediate and the expulsion of a 3'-OH DNA strand. The free DNA strand then undergoes passage around the unbroken strand thus removing DNA supercoils. Finally, in the religation step, the DNA 3'-OH attacks the covalent intermediate to expel the active-site tyrosine and restore the DNA phosphodiester backbone. As an essential component of the RMI complex it is involved in chromosome separation and the processing of homologous recombination intermediates to limit DNA crossover formation in cells. Has DNA decatenation activity. It is required for mtDNA decatenation and segregation after completion of replication, in a process that does not require BLM, RMI1 and RMI2. The polypeptide is DNA topoisomerase 3-alpha (Top3a) (Mus musculus (Mouse)).